The chain runs to 233 residues: Phosphoglycolate phosphatase (233 aa).

Catalysis depends on D9, which acts as the Nucleophile. The Mg(2+) site is built by D9 and D11. K154 lines the substrate pocket. Residues D177 and D181 each contribute to the Mg(2+) site.

It belongs to the archaeal SPP-like hydrolase family. Mg(2+) is required as a cofactor.

It catalyses the reaction 2-phosphoglycolate + H2O = glycolate + phosphate. Catalyzes the dephosphorylation of 2-phosphoglycolate. This Pyrococcus abyssi (strain GE5 / Orsay) protein is Phosphoglycolate phosphatase.